A 101-amino-acid chain; its full sequence is ATP synthase subunit c (101 aa).

2 helical membrane-spanning segments follow: residues 31 to 51 (AFAYLGAGLAMIGVIGVGAGQ) and 81 to 101 (AISETSSIYALLVALILIFVG).

The protein belongs to the ATPase C chain family. In terms of assembly, F-type ATPases have 2 components, F(1) - the catalytic core - and F(0) - the membrane proton channel. F(1) has five subunits: alpha(3), beta(3), gamma(1), delta(1), epsilon(1). F(0) has three main subunits: a(1), b(2) and c(10-14). The alpha and beta chains form an alternating ring which encloses part of the gamma chain. F(1) is attached to F(0) by a central stalk formed by the gamma and epsilon chains, while a peripheral stalk is formed by the delta and b chains.

The protein localises to the cell membrane. F(1)F(0) ATP synthase produces ATP from ADP in the presence of a proton or sodium gradient. F-type ATPases consist of two structural domains, F(1) containing the extramembraneous catalytic core and F(0) containing the membrane proton channel, linked together by a central stalk and a peripheral stalk. During catalysis, ATP synthesis in the catalytic domain of F(1) is coupled via a rotary mechanism of the central stalk subunits to proton translocation. Functionally, key component of the F(0) channel; it plays a direct role in translocation across the membrane. A homomeric c-ring of between 10-14 subunits forms the central stalk rotor element with the F(1) delta and epsilon subunits. The sequence is that of ATP synthase subunit c from Mesomycoplasma hyopneumoniae (strain 7448) (Mycoplasma hyopneumoniae).